Here is a 587-residue protein sequence, read N- to C-terminus: Phosphomethylpyrimidine synthase (587 aa).

Residues Asn-218, Met-247, Tyr-276, His-312, 332-334, 373-376, and Glu-412 contribute to the substrate site; these read SRG and DGLR. His-416 provides a ligand contact to Zn(2+). Tyr-439 contacts substrate. Residue His-480 coordinates Zn(2+). 3 residues coordinate [4Fe-4S] cluster: Cys-560, Cys-563, and Cys-568.

This sequence belongs to the ThiC family. [4Fe-4S] cluster serves as cofactor.

The enzyme catalyses 5-amino-1-(5-phospho-beta-D-ribosyl)imidazole + S-adenosyl-L-methionine = 4-amino-2-methyl-5-(phosphooxymethyl)pyrimidine + CO + 5'-deoxyadenosine + formate + L-methionine + 3 H(+). It participates in cofactor biosynthesis; thiamine diphosphate biosynthesis. Catalyzes the synthesis of the hydroxymethylpyrimidine phosphate (HMP-P) moiety of thiamine from aminoimidazole ribotide (AIR) in a radical S-adenosyl-L-methionine (SAM)-dependent reaction. This Porphyromonas gingivalis (strain ATCC BAA-308 / W83) protein is Phosphomethylpyrimidine synthase.